Consider the following 1071-residue polypeptide: Kinesin-like protein KIN-14J (1071 aa).

A Calponin-homology (CH) domain is found at 39–142; that stretch reads KKGHQSLVEW…SLKALKASFS (104 aa). The tract at residues 157-181 is disordered; it reads WSLPEDHSDSRGDDRNFTDGFQSKE. Over residues 158–173 the composition is skewed to basic and acidic residues; the sequence is SLPEDHSDSRGDDRNF. Positions 299–389 form a coiled coil; sequence EKTRIEEKER…ELEKLCQSKS (91 aa). Residues 472–800 enclose the Kinesin motor domain; that stretch reads NIRVYCRIRP…LKFAERVSGV (329 aa). 556–563 lines the ATP pocket; sequence GQTGSGKT. Residues 811–844 adopt a coiled-coil conformation; it reads GRDVRQLMEQVSNLKDVIAKKDEELQNFQKVKGN. 2 disordered regions span residues 852–931 and 995–1071; these read GLSN…AAKG and ARMT…NRRR. Basic and acidic residues-rich tracts occupy residues 910-921 and 995-1017; these read SDERKHQKDYHQ and ARMT…KDRT. The segment covering 1034-1049 has biased composition (polar residues); the sequence is TRPSRLSIATSSSSKA.

Belongs to the TRAFAC class myosin-kinesin ATPase superfamily. Kinesin family. KIN-14 subfamily.

The chain is Kinesin-like protein KIN-14J from Arabidopsis thaliana (Mouse-ear cress).